A 450-amino-acid chain; its full sequence is tRNA modification GTPase MnmE (450 aa).

Residues R20, E78, and K117 each contribute to the (6S)-5-formyl-5,6,7,8-tetrahydrofolate site. One can recognise a TrmE-type G domain in the interval 211-372; the sequence is GFRMVIVGKP…LEEAIYRETQ (162 aa). N221 is a binding site for K(+). GTP is bound by residues 221–226, 240–246, and 265–268; these read NVGKST, TDIPGTT, and DTAG. Residue S225 coordinates Mg(2+). T240, I242, and T245 together coordinate K(+). T246 contributes to the Mg(2+) binding site. (6S)-5-formyl-5,6,7,8-tetrahydrofolate is bound at residue K450.

The protein belongs to the TRAFAC class TrmE-Era-EngA-EngB-Septin-like GTPase superfamily. TrmE GTPase family. In terms of assembly, homodimer. Heterotetramer of two MnmE and two MnmG subunits. Requires K(+) as cofactor.

The protein resides in the cytoplasm. In terms of biological role, exhibits a very high intrinsic GTPase hydrolysis rate. Involved in the addition of a carboxymethylaminomethyl (cmnm) group at the wobble position (U34) of certain tRNAs, forming tRNA-cmnm(5)s(2)U34. In Thermotoga petrophila (strain ATCC BAA-488 / DSM 13995 / JCM 10881 / RKU-1), this protein is tRNA modification GTPase MnmE.